We begin with the raw amino-acid sequence, 179 residues long: Large ribosomal subunit protein uL5 (179 aa).

This sequence belongs to the universal ribosomal protein uL5 family. In terms of assembly, part of the 50S ribosomal subunit; part of the 5S rRNA/L5/L18/L25 subcomplex. Contacts the 5S rRNA and the P site tRNA. Forms a bridge to the 30S subunit in the 70S ribosome.

Its function is as follows. This is one of the proteins that bind and probably mediate the attachment of the 5S RNA into the large ribosomal subunit, where it forms part of the central protuberance. In the 70S ribosome it contacts protein S13 of the 30S subunit (bridge B1b), connecting the 2 subunits; this bridge is implicated in subunit movement. Contacts the P site tRNA; the 5S rRNA and some of its associated proteins might help stabilize positioning of ribosome-bound tRNAs. This is Large ribosomal subunit protein uL5 from Chromobacterium violaceum (strain ATCC 12472 / DSM 30191 / JCM 1249 / CCUG 213 / NBRC 12614 / NCIMB 9131 / NCTC 9757 / MK).